The following is a 130-amino-acid chain: Small ribosomal subunit protein uS8 (130 aa).

It belongs to the universal ribosomal protein uS8 family. Part of the 30S ribosomal subunit. Contacts proteins S5 and S12.

One of the primary rRNA binding proteins, it binds directly to 16S rRNA central domain where it helps coordinate assembly of the platform of the 30S subunit. The chain is Small ribosomal subunit protein uS8 from Pectobacterium carotovorum subsp. carotovorum (strain PC1).